A 228-amino-acid polypeptide reads, in one-letter code: Uracil-DNA glycosylase (228 aa).

The Proton acceptor role is filled by Asp-65.

It belongs to the uracil-DNA glycosylase (UDG) superfamily. UNG family.

It is found in the cytoplasm. It catalyses the reaction Hydrolyzes single-stranded DNA or mismatched double-stranded DNA and polynucleotides, releasing free uracil.. In terms of biological role, excises uracil residues from the DNA which can arise as a result of misincorporation of dUMP residues by DNA polymerase or due to deamination of cytosine. The chain is Uracil-DNA glycosylase from Lacticaseibacillus paracasei (strain ATCC 334 / BCRC 17002 / CCUG 31169 / CIP 107868 / KCTC 3260 / NRRL B-441) (Lactobacillus paracasei).